Consider the following 1581-residue polypeptide: Mediator of RNA polymerase II transcription subunit 1 (1581 aa).

The interval M1–N670 is interaction with the Mediator complex and THRA. Residues M16 to G590 are interaction with ESR1. Interaction with the Mediator complex regions lie at residues F108–T212 and S215–G390. Residues P405–M644 form an interaction with THRA region. Residues P542–E788 are interaction with VDR. S588 carries the post-translational modification Phosphoserine. An LXXLL motif 1 motif is present at residues L604–L608. Disordered stretches follow at residues Q609–E705, K791–L819, L868–K895, and E947–I1566. Positions P622 to V632 are enriched in pro residues. Residues P622–K701 are interaction with PPARGC1A and THRA. The LXXLL motif 2 signature appears at L645–L649. Polar residues predominate over residues Q655–S675. The interaction with ESR1 stretch occupies residues D656–Q1065. S664 is modified (phosphoserine). The interaction with GATA1 stretch occupies residues C681 to M715. The segment covering K690 to E705 has biased composition (basic and acidic residues). A Phosphoserine modification is found at S794. T804 is modified (phosphothreonine). A compositionally biased stretch (polar residues) spans R807–L819. An Integrase domain-binding motif (IBM) motif is present at residues Q874–A901. Phosphoserine is present on residues S886 and S952. Over residues L962–E973 the composition is skewed to basic and acidic residues. T1031 bears the Phosphothreonine; by MAPK1 or MAPK3 mark. The span at P1033–T1050 shows a compositional bias: low complexity. T1050 and T1056 each carry phosphothreonine. Low complexity-rich tracts occupy residues S1077–S1093, S1100–S1111, and S1119–S1156. S1156 is modified (phosphoserine). Polar residues predominate over residues G1162 to H1195. K1177 is subject to N6-acetyllysine. S1207 is modified (phosphoserine). Residue T1215 is modified to Phosphothreonine. Low complexity-rich tracts occupy residues S1218–S1227 and M1234–K1293. Residue S1223 is modified to Phosphoserine. Residues L1249–L1421 form an interaction with TP53 region. At S1302 the chain carries Phosphoserine. Over residues G1330 to N1345 the composition is skewed to polar residues. Position 1347 is a phosphoserine (S1347). Residues Q1352–K1364 show a composition bias toward basic and acidic residues. Residues S1403 and S1433 each carry the phosphoserine modification. 2 stretches are compositionally biased toward polar residues: residues M1425–T1440 and P1448–S1482. T1440 carries the post-translational modification Phosphothreonine. Phosphothreonine; by MAPK1 or MAPK3 is present on T1457. Residues S1463, S1465, S1479, S1481, and S1482 each carry the phosphoserine modification. Residues K1496–K1505 show a composition bias toward basic residues. Residues K1506–K1522 show a composition bias toward basic and acidic residues. At K1529 the chain carries N6-acetyllysine. Residues W1533–L1552 are compositionally biased toward polar residues.

The protein belongs to the Mediator complex subunit 1 family. Component of the Mediator complex, which is composed of MED1, MED4, MED6, MED7, MED8, MED9, MED10, MED11, MED12, MED13, MED13L, MED14, MED15, MED16, MED17, MED18, MED19, MED20, MED21, MED22, MED23, MED24, MED25, MED26, MED27, MED29, MED30, MED31, CCNC, CDK8 and CDC2L6/CDK11. The MED12, MED13, CCNC and CDK8 subunits form a distinct module termed the CDK8 module. Mediator containing the CDK8 module is less active than Mediator lacking this module in supporting transcriptional activation. Individual preparations of the Mediator complex lacking one or more distinct subunits have been variously termed ARC, CRSP, DRIP, PC2, SMCC and TRAP. This subunit specifically interacts with a number of nuclear receptors in a ligand-dependent fashion including AR, ESR1, ESR2, PPARA, PPARG, RORA, RXRA, RXRG, THRA, THRB and VDR. Interacts with CTNNB1, GABPA, GLI3, PPARGC1A and TP53. Interacts with GATA1 and YWHAH. Interacts with CLOCK; this interaction requires the presence of THRAP3. Interacts with CCAR1. Interacts with NR4A3. Interacts (via IBM motif) with PSIP1 (via IBD domain); phosphorylation increases its affinity for PSIP1. Interacts with USP22. In terms of processing, phosphorylated by MAPK1 or MAPK3 during G2/M phase which may enhance protein stability and promote entry into the nucleolus. Phosphorylation increases its interaction with PSIP1.

Its subcellular location is the nucleus. In terms of biological role, component of the Mediator complex, a coactivator involved in the regulated transcription of nearly all RNA polymerase II-dependent genes. Mediator functions as a bridge to convey information from gene-specific regulatory proteins to the basal RNA polymerase II transcription machinery. Mediator is recruited to promoters by direct interactions with regulatory proteins and serves as a scaffold for the assembly of a functional preinitiation complex with RNA polymerase II and the general transcription factors. Acts as a coactivator for GATA1-mediated transcriptional activation during erythroid differentiation of K562 erythroleukemia cells. The polypeptide is Mediator of RNA polymerase II transcription subunit 1 (MED1) (Pongo abelii (Sumatran orangutan)).